Consider the following 92-residue polypeptide: Protamine-2 (92 aa).

Positions 1–76 are disordered; sequence MVRCRVRSPS…RRACRHRRHR (76 aa). Residues 7–20 are compositionally biased toward low complexity; that stretch reads RSPSESPQQGSGQQ. Residues S8 and S10 each carry the phosphoserine modification. Residues 21–36 are compositionally biased toward basic and acidic residues; sequence RENERQDQDQELRPED. Basic residues predominate over residues 42–76; sequence RTHRGRYHYRHRSHTRRRRSCRRRRRRACRHRRHR.

Belongs to the protamine P2 family. As to quaternary structure, interacts with TDRP. Post-translationally, proteolytic processing into mature chains is required for histone eviction during spermatogenesis. Transition proteins (TNP1 and TNP2) are required for processing. Testis.

It is found in the nucleus. The protein resides in the chromosome. In terms of biological role, protamines substitute for histones in the chromatin of sperm during the haploid phase of spermatogenesis. They compact sperm DNA into a highly condensed, stable and inactive complex. The protein is Protamine-2 (PRM2) of Sus scrofa (Pig).